Here is a 341-residue protein sequence, read N- to C-terminus: Phosphate acyltransferase (341 aa).

Belongs to the PlsX family. Homodimer. Probably interacts with PlsY.

It is found in the cytoplasm. The catalysed reaction is a fatty acyl-[ACP] + phosphate = an acyl phosphate + holo-[ACP]. It functions in the pathway lipid metabolism; phospholipid metabolism. Its function is as follows. Catalyzes the reversible formation of acyl-phosphate (acyl-PO(4)) from acyl-[acyl-carrier-protein] (acyl-ACP). This enzyme utilizes acyl-ACP as fatty acyl donor, but not acyl-CoA. The protein is Phosphate acyltransferase of Vibrio parahaemolyticus serotype O3:K6 (strain RIMD 2210633).